The chain runs to 935 residues: ABC transporter A family member 7 (935 aa).

7 consecutive transmembrane segments (helical) span residues 34–54 (LIMI…LFDT), 338–358 (IASL…FPVI), 392–412 (FLTI…AIGL), 424–444 (FVFY…VSSV), 454–474 (ASYI…NFLI), 483–503 (WIIV…YELA), and 528–548 (DDVF…AYYI). The disordered stretch occupies residues 571 to 591 (SLRRPSLQRQGSKVSVDMEKP). Positions 613-850 (IVCDNLKKVY…YGGSYVFTMT (238 aa)) constitute an ABC transporter domain. An ATP-binding site is contributed by 651 to 658 (GPNGAGKT).

It belongs to the ABC transporter superfamily. ABCA family. CPR flippase (TC 3.A.1.211) subfamily.

It localises to the membrane. In Arabidopsis thaliana (Mouse-ear cress), this protein is ABC transporter A family member 7 (ABCA7).